A 164-amino-acid polypeptide reads, in one-letter code: Crossover junction endodeoxyribonuclease RuvC (164 aa).

Residues Asp7, Glu67, and Asp140 contribute to the active site. Mg(2+)-binding residues include Asp7, Glu67, and Asp140.

It belongs to the RuvC family. As to quaternary structure, homodimer which binds Holliday junction (HJ) DNA. The HJ becomes 2-fold symmetrical on binding to RuvC with unstacked arms; it has a different conformation from HJ DNA in complex with RuvA. In the full resolvosome a probable DNA-RuvA(4)-RuvB(12)-RuvC(2) complex forms which resolves the HJ. The cofactor is Mg(2+).

The protein resides in the cytoplasm. It carries out the reaction Endonucleolytic cleavage at a junction such as a reciprocal single-stranded crossover between two homologous DNA duplexes (Holliday junction).. In terms of biological role, the RuvA-RuvB-RuvC complex processes Holliday junction (HJ) DNA during genetic recombination and DNA repair. Endonuclease that resolves HJ intermediates. Cleaves cruciform DNA by making single-stranded nicks across the HJ at symmetrical positions within the homologous arms, yielding a 5'-phosphate and a 3'-hydroxyl group; requires a central core of homology in the junction. The consensus cleavage sequence is 5'-(A/T)TT(C/G)-3'. Cleavage occurs on the 3'-side of the TT dinucleotide at the point of strand exchange. HJ branch migration catalyzed by RuvA-RuvB allows RuvC to scan DNA until it finds its consensus sequence, where it cleaves and resolves the cruciform DNA. This Alkaliphilus metalliredigens (strain QYMF) protein is Crossover junction endodeoxyribonuclease RuvC.